Consider the following 777-residue polypeptide: MNSERSERIKIPVLPLRDVVVYPHMVIPLFVGRKKSIHCIETSMNNDKKIMLIAQKEASKDEPSTNDLFNIGTISSILQMLKLPDGTVKVLVEGLQRACIKNIESNGEHLVAEVELIISPTVIDKEQEVLIRTTVNQFESYIKLNKKIPSEILNTLSQTKNAEKLADTIAAHMPLKLADKQSVLEIYNVNERLEFLMAIMETEIDLLKVEKRIRNRVKKQMEKSQREYYLNEQIKAIQKELGDMDEIPDENKILKRKIKSLKMPKEAKEKTESELQKLKMMSPMSAEATVVRSYIDWMIQVPWNIKTKIKKDIQEAKKILDIDHFGLEKVKERILEYLAVQSRTNKVKGPILCLIGPPGVGKTSLGKSIAKSTGRKYVRMALGGIRDEAEIRGHRRTYIGSMPGKLMQKMVKAKVKNPLFLLDEIDKMSCDIRVDPASALLEVLDPEQNINFNDHYLEVDYDLSDVMFVATSNSMNIPAPLLDRMEIIRLSGYTENEKLNIAKCYLYPKQMERNALKRNELIITDCAIISIIQYYTREAGVRSLEREISKICRKVVKLLILNKSLKKIEINSKNLKKFLGIKRFDYGKTNNLNQIGQVVGLAWTEVGGELLTIETACVSGKGKLTYTGSLGEVMQESIQAALTVVRSQAKKLGIKKDFHEKHDIHVHVPEGATPKDGPSAGIAMCTAIVSSLTKNPVKSNIAMTGEITLQGRVLTIGGLKEKLLAAHRGGVKTVLIPYENKRNLEEIPKNIIEGLTIYPVKNIEEVLKIALENTPYV.

A Lon N-terminal domain is found at 11-204 (IPVLPLRDVV…FLMAIMETEI (194 aa)). Residue 356 to 363 (GPPGVGKT) participates in ATP binding. The Lon proteolytic domain occupies 592–773 (LNQIGQVVGL…EEVLKIALEN (182 aa)). Active-site residues include serine 679 and lysine 722.

It belongs to the peptidase S16 family. As to quaternary structure, homohexamer. Organized in a ring with a central cavity.

Its subcellular location is the cytoplasm. It catalyses the reaction Hydrolysis of proteins in presence of ATP.. Functionally, ATP-dependent serine protease that mediates the selective degradation of mutant and abnormal proteins as well as certain short-lived regulatory proteins. Required for cellular homeostasis and for survival from DNA damage and developmental changes induced by stress. Degrades polypeptides processively to yield small peptide fragments that are 5 to 10 amino acids long. Binds to DNA in a double-stranded, site-specific manner. The chain is Lon protease from Buchnera aphidicola subsp. Schizaphis graminum (strain Sg).